Consider the following 298-residue polypeptide: Tyrosine recombinase XerC (298 aa).

Positions 2-88 (TDLHTDVERY…ALRSFFDWLV (87 aa)) constitute a Core-binding (CB) domain. A Tyr recombinase domain is found at 109 to 288 (HLPKNIDVDD…DFQHLASVYD (180 aa)). Catalysis depends on residues Arg148, Lys172, His240, Arg243, and His266. The O-(3'-phospho-DNA)-tyrosine intermediate role is filled by Tyr275.

Belongs to the 'phage' integrase family. XerC subfamily. In terms of assembly, forms a cyclic heterotetrameric complex composed of two molecules of XerC and two molecules of XerD, in which XerC interacts with XerD via its C-terminal region, XerD interacts with XerC via its C-terminal region and so on.

It is found in the cytoplasm. FtsK may regulate the catalytic switch between XerC and XerD in the heterotetrameric complex during the two steps of the recombination process. Its function is as follows. Site-specific tyrosine recombinase, which acts by catalyzing the cutting and rejoining of the recombining DNA molecules. Binds cooperatively to specific DNA consensus sequences that are separated from XerD binding sites by a short central region, forming the heterotetrameric XerC-XerD complex that recombines DNA substrates. The complex is essential to convert dimers of the bacterial chromosome into monomers to permit their segregation at cell division. It also contributes to the segregational stability of plasmids. In the complex XerC specifically exchanges the top DNA strands. The polypeptide is Tyrosine recombinase XerC (Shigella flexneri serotype 5b (strain 8401)).